Consider the following 173-residue polypeptide: Small ribosomal subunit protein uS5 (173 aa).

The region spanning Trp-17–Val-80 is the S5 DRBM domain.

This sequence belongs to the universal ribosomal protein uS5 family. In terms of assembly, part of the 30S ribosomal subunit. Contacts proteins S4 and S8.

In terms of biological role, with S4 and S12 plays an important role in translational accuracy. Its function is as follows. Located at the back of the 30S subunit body where it stabilizes the conformation of the head with respect to the body. This Microcystis aeruginosa (strain NIES-843 / IAM M-2473) protein is Small ribosomal subunit protein uS5.